A 229-amino-acid chain; its full sequence is Ribonuclease 3 (229 aa).

Residues leucine 5–glycine 127 form the RNase III domain. Glutamate 40 contacts Mg(2+). Aspartate 44 is a catalytic residue. The Mg(2+) site is built by aspartate 113 and glutamate 116. The active site involves glutamate 116. Residues aspartate 154–valine 224 form the DRBM domain.

Belongs to the ribonuclease III family. As to quaternary structure, homodimer. Requires Mg(2+) as cofactor.

The protein resides in the cytoplasm. It catalyses the reaction Endonucleolytic cleavage to 5'-phosphomonoester.. Digests double-stranded RNA. Involved in the processing of primary rRNA transcript to yield the immediate precursors to the large and small rRNAs (23S and 16S). Processes some mRNAs, and tRNAs when they are encoded in the rRNA operon. Processes pre-crRNA and tracrRNA of type II CRISPR loci if present in the organism. The protein is Ribonuclease 3 of Pseudomonas syringae pv. syringae (strain B728a).